We begin with the raw amino-acid sequence, 385 residues long: 2-oxoglutarate-dependent dioxygenase AFUA_1G01000 (385 aa).

The region spanning 203 to 327 (PSDDFLRLLR…RYSVLVGTRP (125 aa)) is the Fe2OG dioxygenase domain. H230, D232, and H304 together coordinate Fe cation. R318 is a binding site for 2-oxoglutarate.

The protein belongs to the iron/ascorbate-dependent oxidoreductase family. Fe(2+) serves as cofactor.

Functionally, 2-oxoglutarate-dependent dioxygenase; part of the gene cluster that mediates the biosynthesis of fumigermin that inhibits germination of spores of the inducing S.rapamycinicus, and thus helps the fungus to defend resources in the shared habitat against a bacterial competitor. The partially reducing polyketide synthase fngA alone is sufficient for the production of fumigermin. FgnA catalyzes the condensation of 3 malonyl-CoA units to an acetyl-CoA starter, and 3 methylations to yield fumigermin. It is remarkable that the five cluster genes including fgnA are conserved in distantly related fungi, supporting the assumption of a fumigermin cluster; it is thus possible that originally all five genes were functional, but that the genes encoding tailoring enzymes became inactive from mutations, similar to the case of the fgnA gene in strains A1163 and Af293. This chain is 2-oxoglutarate-dependent dioxygenase AFUA_1G01000, found in Aspergillus fumigatus (strain ATCC MYA-4609 / CBS 101355 / FGSC A1100 / Af293) (Neosartorya fumigata).